A 639-amino-acid chain; its full sequence is MAKENSSHSLAEAKRKRLTWILCVSGLCILSYVLGSWQTNTVPTSSSEAYSRMGCDETSTTTRAQTTQTQTNPSSDDTSSSLSSSEPVELDFESHHKLELKITNQTVKYFEPCDMSLSEYTPCEDRERGRRFDRNMMKYRERHCPSKDELLYCLIPPPPNYKIPFKWPQSRDYAWYDNIPHKELSIEKAIQNWIQVEGERFRFPGGGTMFPRGADAYIDDIARLIPLTDGAIRTAIDTGCGVASFGAYLLKRDIVAMSFAPRDTHEAQVQFALERGVPAIIGIMGSRRLPYPARAFDLAHCSRCLIPWFQNDGLYLTEVDRVLRPGGYWILSGPPINWKKYWKGWERSQEDLKQEQDSIEDAARSLCWKKVTEKGDLSIWQKPINHVECNKLKRVHKTPPLCSKSDLPDFAWYKDLESCVTPLPEANSSDEFAGGALEDWPNRAFAVPPRIIGGTIPDINAEKFREDNEVWKERISYYKQIMPELSRGRFRNIMDMNAYLGGFAAAMMKYPSWVMNVVPVDAEKQTLGVIFERGFIGTYQDWCEGFSTYPRTYDLIHAGGLFSIYENRCDVTLILLEMDRILRPEGTVVFRDTVEMLTKIQSITNGMRWKSRILDHERGPFNPEKILLAVKSYWTGPSS.

The Cytoplasmic portion of the chain corresponds to M1 to T19. The helical; Signal-anchor for type II membrane protein transmembrane segment at W20 to V42 threads the bilayer. The interval T41–E86 is disordered. The Lumenal portion of the chain corresponds to P43–S639. Positions T58–S85 are enriched in low complexity. N-linked (GlcNAc...) asparagine glycosylation is found at N104 and N427.

It belongs to the methyltransferase superfamily.

The protein localises to the endoplasmic reticulum membrane. The chain is Probable methyltransferase PMT18 from Arabidopsis thaliana (Mouse-ear cress).